Reading from the N-terminus, the 149-residue chain is Large ribosomal subunit protein uL13 (149 aa).

Belongs to the universal ribosomal protein uL13 family. Part of the 50S ribosomal subunit.

Its function is as follows. This protein is one of the early assembly proteins of the 50S ribosomal subunit, although it is not seen to bind rRNA by itself. It is important during the early stages of 50S assembly. In Thermosipho africanus (strain TCF52B), this protein is Large ribosomal subunit protein uL13.